The following is a 192-amino-acid chain: Fibroblast growth factor 4B (192 aa).

The signal sequence occupies residues 1-22 (MTVQLALVPILLLGTAAVMVHC).

The protein belongs to the heparin-binding growth factors family.

It is found in the secreted. In terms of biological role, plays an important role in the regulation of embryonic development, cell proliferation, and cell differentiation. Good candidate for an inducing factor with possible roles both in mesoderm induction at the blastula stage and in the formation of the anteroposterior axis at the gastrula stage. This Xenopus laevis (African clawed frog) protein is Fibroblast growth factor 4B (fgf4-b).